A 346-amino-acid polypeptide reads, in one-letter code: HLA class I histocompatibility antigen, alpha chain F (346 aa).

A signal peptide spans 1–21; it reads MAPRSLLLLLSGALALTDTWA. Positions 22–111 are alpha-1; the sequence is GSHSLRYFST…LLRRYNQSEA (90 aa). The Extracellular portion of the chain corresponds to 22 to 305; it reads GSHSLRYFST…EQSPQPTIPI (284 aa). A peptide antigen contacts are provided by Asn91 and Arg105. The N-linked (GlcNAc...) asparagine glycan is linked to Asn107. The tract at residues 112 to 203 is alpha-2; it reads GSHTLQGMNG…ENGKETLQRA (92 aa). 2 disulfide bridges follow: Cys122/Cys185 and Cys224/Cys280. Residues Thr164, Tyr168, and Glu176 each coordinate a peptide antigen. The interval 204–295 is alpha-3; the sequence is DPPKAHVAHH…GLPQPLILRW (92 aa). One can recognise an Ig-like C1-type domain in the interval 206–296; sequence PKAHVAHHPI…LPQPLILRWE (91 aa). The segment at 296–305 is connecting peptide; that stretch reads EQSPQPTIPI. The chain crosses the membrane as a helical span at residues 306-329; that stretch reads VGIVAGLVVLGAVVTGAVVAAVMW. Residues 330-346 lie on the Cytoplasmic side of the membrane; sequence RKKSSDRNRGSYSQAAV. The Sorting signal sequence; Golgi-retention signal; ER-retention signal signature appears at 336 to 338; it reads RNR.

Belongs to the MHC class I family. Forms a heterotrimer with B2M and a self-peptide. Binds a diverse number of peptides ranging from 7 to more than 30 amino acids. Peptide-bound HLA-F-B2M interacts with LILRB1 and LILRB2 but not with KIR3DS1 or KIR3DL2; this interaction is direct. The OC form interacts with KIR3DS1, KIR2DS4 and KIR3DL2; this interaction is direct. Interacts with TAP1-TAP2 complex and CALR; this interaction is required for appropriate folding and peptide loading. Interacts with the coat protein complex II and 14-3-3 proteins; these interactions likely control the anterograde ER-to-Golgi transport of HLA-F. HLA-F-B2M complex interacts with the heavy chain of other MHC class I molecules including HLA-A and HLA-E; this interaction may regulate the intracellular trafficking and the stability of peptide-free MHC class I OCs. In terms of processing, N-glycosylated. As to expression, expressed in resting B cells (at protein level). Expressed in secondary lymphoid organs rich in B and T cells such as the tonsils, spleen, and thymus (at protein level). Expressed in the endothelial cells of the tonsils. Expressed on activated lymphoid cells including B cells, NK cells, CD4+ T cells and memory T cells (at protein level). Expressed in motor neurons of spinal cord.

The protein localises to the cell membrane. It localises to the early endosome membrane. The protein resides in the lysosome membrane. Its function is as follows. Non-classical major histocompatibility class Ib molecule postulated to play a role in immune surveillance, immune tolerance and inflammation. Functions in two forms, as a heterotrimeric complex with B2M/beta-2 microglobulin and a peptide (peptide-bound HLA-F-B2M) and as an open conformer (OC) devoid of peptide and B2M (peptide-free OC). In complex with B2M, presents non-canonical self-peptides carrying post-translational modifications, particularly phosphorylated self-peptides. Peptide-bound HLA-F-B2M acts as a ligand for LILRB1 inhibitory receptor, a major player in maternal-fetal tolerance. Peptide-free OC acts as a ligand for KIR3DS1 and KIR3DL2 receptors. Upon interaction with activating KIR3DS1 receptor on NK cells, triggers NK cell degranulation and anti-viral cytokine production. Through interaction with KIR3DL2 receptor, inhibits NK and T cell effector functions. May interact with other MHC class I OCs to cross-present exogenous viral, tumor or minor histompatibility antigens to cytotoxic CD8+ T cells, triggering effector and memory responses. May play a role in inflammatory responses in the peripheral nervous system. Through interaction with KIR3DL2, may protect motor neurons from astrocyte-induced toxicity. The polypeptide is HLA class I histocompatibility antigen, alpha chain F (Homo sapiens (Human)).